A 465-amino-acid polypeptide reads, in one-letter code: Cysteine--tRNA ligase (465 aa).

Residue C29 coordinates Zn(2+). The 'HIGH' region signature appears at 31–41; that stretch reads PTVYNYIHIGN. Zn(2+) is bound by residues C209, H234, and E238. The 'KMSKS' region signature appears at 266-270; it reads KMSKS. K269 is a binding site for ATP. S270 bears the Phosphoserine mark.

The protein belongs to the class-I aminoacyl-tRNA synthetase family. In terms of assembly, monomer. It depends on Zn(2+) as a cofactor.

The protein resides in the cytoplasm. The enzyme catalyses tRNA(Cys) + L-cysteine + ATP = L-cysteinyl-tRNA(Cys) + AMP + diphosphate. The polypeptide is Cysteine--tRNA ligase (Bacillus anthracis (strain A0248)).